We begin with the raw amino-acid sequence, 132 residues long: S-protein homolog 8 (132 aa).

A signal peptide spans 1 to 20; the sequence is MHSLSWFLLVIGLSVGLSSG.

It belongs to the plant self-incompatibility (S1) protein family. In terms of tissue distribution, mostly expressed in seedlings, stems, leaves and floral tissues, and, to a lower extent, in roots.

Its subcellular location is the secreted. The protein is S-protein homolog 8 of Arabidopsis thaliana (Mouse-ear cress).